The following is a 551-amino-acid chain: Malate synthase, glyoxysomal (551 aa).

Arg-174 (proton acceptor) is an active-site residue. Residue Asp-458 is the Proton donor of the active site.

This sequence belongs to the malate synthase family.

The protein localises to the glyoxysome. The enzyme catalyses glyoxylate + acetyl-CoA + H2O = (S)-malate + CoA + H(+). Its pathway is carbohydrate metabolism; glyoxylate cycle; (S)-malate from isocitrate: step 2/2. The sequence is that of Malate synthase, glyoxysomal (PMS1) from Candida tropicalis (Yeast).